The sequence spans 783 residues: Cyclic di-GMP phosphodiesterase NbdA (783 aa).

Residues 81-274 (YSPSLVALAF…FTGMAALVLS (194 aa)) form the MHYT domain. Helical transmembrane passes span 84–104 (SLVA…LDMV), 120–140 (IGAF…MLAF), 150–170 (LPIT…TMYM), 176–196 (FGLL…AAMH), 215–235 (LFAL…AAVP), 255–275 (LLAG…VLSV), and 292–312 (LGWL…WAAW). Topologically, residues 313–783 (SEKQRERRLS…APPLRSLNQA (471 aa)) are cytoplasmic. The GGDEF domain occupies 375–507 (KGLAVMFLDL…GRNNAQFFSR (133 aa)). The EAL domain occupies 516-770 (ELQMEEELRQ…ALEEFLRAYR (255 aa)). Residues glutamine 537, glutamate 551, arginine 555, asparagine 610, and asparagine 615 each coordinate 3',3'-c-di-GMP. Glutamate 551 is a binding site for Mg(2+). Residue asparagine 610 participates in Mg(2+) binding. Glutamate 642, aspartate 672, and aspartate 673 together coordinate Mg(2+). Aspartate 672 lines the 3',3'-c-di-GMP pocket. Arginine 696 contacts 3',3'-c-di-GMP. Glutamate 729 serves as a coordination point for Mg(2+). 3',3'-c-di-GMP-binding residues include glutamate 732 and tyrosine 751.

Requires Mg(2+) as cofactor.

It is found in the cell inner membrane. It catalyses the reaction 3',3'-c-di-GMP + H2O = 5'-phosphoguanylyl(3'-&gt;5')guanosine + H(+). PDE activity is stimulated by GTP. It could also be stimulated by NO. Displays c-di-GMP-specific phosphodiesterase (PDE) activity. Seems to play a specific role in nitric oxide (NO)-induced biofilm dispersion. Enhanced NbdA synthesis in the presence of NO increases PDE activity, leading to reduced cellular c-di-GMP levels and biofilm dispersion. Does not show diguanylate cyclase (DGC) activity. This Pseudomonas aeruginosa (strain ATCC 15692 / DSM 22644 / CIP 104116 / JCM 14847 / LMG 12228 / 1C / PRS 101 / PAO1) protein is Cyclic di-GMP phosphodiesterase NbdA.